The chain runs to 358 residues: Alternative oxidase, mitochondrial (358 aa).

Residues 152–172 form a helical membrane-spanning segment; the sequence is LIRMVFLESVAGVPGMVAGML. Fe cation is bound by residues Glu159, Glu198, and His201. The chain crosses the membrane as a helical span at residues 217–237; sequence FMIIGAQGVFFNSMFLSYLIS. The Fe cation site is built by Glu249, Glu250, Glu306, and His309.

This sequence belongs to the alternative oxidase family. Fe cation is required as a cofactor.

The protein localises to the mitochondrion inner membrane. Catalyzes cyanide-resistant oxygen consumption. May increase respiration when the cytochrome respiratory pathway is restricted, or in response to low temperatures. The protein is Alternative oxidase, mitochondrial of Blumeria graminis (Powdery mildew).